Here is a 511-residue protein sequence, read N- to C-terminus: Exodeoxyribonuclease 7 large subunit (511 aa).

Belongs to the XseA family. Heterooligomer composed of large and small subunits.

Its subcellular location is the cytoplasm. It carries out the reaction Exonucleolytic cleavage in either 5'- to 3'- or 3'- to 5'-direction to yield nucleoside 5'-phosphates.. Bidirectionally degrades single-stranded DNA into large acid-insoluble oligonucleotides, which are then degraded further into small acid-soluble oligonucleotides. The protein is Exodeoxyribonuclease 7 large subunit of Brucella abortus (strain S19).